We begin with the raw amino-acid sequence, 207 residues long: dITP/XTP pyrophosphatase (207 aa).

Position 10 to 15 (10 to 15 (TRNAGK)) interacts with substrate. Residues Glu-43 and Asp-72 each coordinate Mg(2+). Catalysis depends on Asp-72, which acts as the Proton acceptor. Substrate contacts are provided by residues Ser-73, 161–164 (FGYD), Lys-184, and 189–190 (HR).

The protein belongs to the HAM1 NTPase family. As to quaternary structure, homodimer. Requires Mg(2+) as cofactor.

It carries out the reaction XTP + H2O = XMP + diphosphate + H(+). The enzyme catalyses dITP + H2O = dIMP + diphosphate + H(+). The catalysed reaction is ITP + H2O = IMP + diphosphate + H(+). In terms of biological role, pyrophosphatase that catalyzes the hydrolysis of nucleoside triphosphates to their monophosphate derivatives, with a high preference for the non-canonical purine nucleotides XTP (xanthosine triphosphate), dITP (deoxyinosine triphosphate) and ITP. Seems to function as a house-cleaning enzyme that removes non-canonical purine nucleotides from the nucleotide pool, thus preventing their incorporation into DNA/RNA and avoiding chromosomal lesions. This is dITP/XTP pyrophosphatase from Nitratidesulfovibrio vulgaris (strain ATCC 29579 / DSM 644 / CCUG 34227 / NCIMB 8303 / VKM B-1760 / Hildenborough) (Desulfovibrio vulgaris).